The following is a 61-amino-acid chain: Large ribosomal subunit protein uL30 (61 aa).

Belongs to the universal ribosomal protein uL30 family. In terms of assembly, part of the 50S ribosomal subunit.

The chain is Large ribosomal subunit protein uL30 from Thermosipho melanesiensis (strain DSM 12029 / CIP 104789 / BI429).